Reading from the N-terminus, the 658-residue chain is Glycogen debranching enzyme (658 aa).

Residue Asp-336 is the Nucleophile of the active site. The active-site Proton donor is the Glu-371.

Belongs to the glycosyl hydrolase 13 family.

It catalyses the reaction Hydrolysis of (1-&gt;6)-alpha-D-glucosidic linkages to branches with degrees of polymerization of three or four glucose residues in limit dextrin.. Its pathway is glycan degradation; glycogen degradation. Functionally, removes maltotriose and maltotetraose chains that are attached by 1,6-alpha-linkage to the limit dextrin main chain, generating a debranched limit dextrin. This is Glycogen debranching enzyme from Klebsiella pneumoniae subsp. pneumoniae (strain ATCC 700721 / MGH 78578).